The chain runs to 424 residues: Delta(14)-sterol reductase erg24 (424 aa).

The next 2 membrane-spanning stretches (helical) occupy residues 19–39 (IGALGVTVLTTVVSFGSFYIC) and 112–132 (LILGVVCTSIYLLGASCMEFI). Residues lysine 317, arginine 321, leucine 344, tryptophan 349, and 356–357 (NY) each bind NADP(+). The helical transmembrane segment at 370-390 (PAGFGSPIPYFYVAYFGVLLV) threads the bilayer. Residues aspartate 396, 400 to 404 (CRVKY), and tyrosine 411 contribute to the NADP(+) site.

The protein belongs to the ERG4/ERG24 family.

The protein resides in the endoplasmic reticulum membrane. The enzyme catalyses 4,4-dimethyl-5alpha-cholesta-8,24-dien-3beta-ol + NADP(+) = 4,4-dimethyl-5alpha-cholesta-8,14,24-trien-3beta-ol + NADPH + H(+). The protein operates within steroid biosynthesis; zymosterol biosynthesis; zymosterol from lanosterol: step 2/6. It functions in the pathway steroid metabolism; ergosterol biosynthesis. In terms of biological role, delta(14)-sterol reductase; part of the third module of ergosterol biosynthesis pathway that includes by the late steps of the pathway. Erg24 reduces the C14=C15 double bond of 4,4-dimethyl-cholesta-8,14,24-trienol to produce 4,4-dimethyl-cholesta-8,24-dienol. The third module or late pathway involves the ergosterol synthesis itself through consecutive reactions that mainly occur in the endoplasmic reticulum (ER) membrane. Firstly, the squalene synthase erg9 catalyzes the condensation of 2 farnesyl pyrophosphate moieties to form squalene, which is the precursor of all steroids. Secondly, squalene is converted into lanosterol by the consecutive action of the squalene epoxidase erg1 and the lanosterol synthase erg7. The lanosterol 14-alpha-demethylase erg11/cyp1 catalyzes C14-demethylation of lanosterol to produce 4,4'-dimethyl cholesta-8,14,24-triene-3-beta-ol. In the next steps, a complex process involving various demethylation, reduction and desaturation reactions catalyzed by the C-14 reductase erg24 and the C-4 demethylation complex erg25-erg26-erg27 leads to the production of zymosterol. Erg28 likely functions in the C-4 demethylation complex reaction by tethering erg26 and Erg27 to the endoplasmic reticulum or to facilitate interaction between these proteins. Then, the sterol 24-C-methyltransferase erg6 catalyzes the methyl transfer from S-adenosyl-methionine to the C-24 of zymosterol to form fecosterol. The C-8 sterol isomerase erg2 catalyzes the reaction which results in unsaturation at C-7 in the B ring of sterols and thus converts fecosterol to episterol. The sterol-C5-desaturases erg31 and erg32 then catalyze the introduction of a C-5 double bond in the B ring to produce 5-dehydroepisterol. The C-22 sterol desaturase erg5 further converts 5-dehydroepisterol into ergosta-5,7,22,24(28)-tetraen-3beta-ol by forming the C-22(23) double bond in the sterol side chain. Finally, ergosta-5,7,22,24(28)-tetraen-3beta-ol is substrate of the C-24(28) sterol reductase erg4 to produce ergosterol. In the genus Schizosaccharomyces, a second route exists between lanosterol and fecosterol, via the methylation of lanosterol to eburicol by erg6, followed by C14-demethylation by erg11/cyp1 and C4-demethylation by the demethylation complex erg25-erg26-erg27. This is Delta(14)-sterol reductase erg24 from Schizosaccharomyces pombe (strain 972 / ATCC 24843) (Fission yeast).